Consider the following 420-residue polypeptide: UDP-N-acetylglucosamine 1-carboxyvinyltransferase (420 aa).

Residue 22 to 23 coordinates phosphoenolpyruvate; sequence KN. Arg93 serves as a coordination point for UDP-N-acetyl-alpha-D-glucosamine. The active-site Proton donor is the Cys117. Cys117 bears the 2-(S-cysteinyl)pyruvic acid O-phosphothioketal mark. UDP-N-acetyl-alpha-D-glucosamine is bound by residues Asp306 and Ile328.

Belongs to the EPSP synthase family. MurA subfamily.

The protein resides in the cytoplasm. It carries out the reaction phosphoenolpyruvate + UDP-N-acetyl-alpha-D-glucosamine = UDP-N-acetyl-3-O-(1-carboxyvinyl)-alpha-D-glucosamine + phosphate. The protein operates within cell wall biogenesis; peptidoglycan biosynthesis. Cell wall formation. Adds enolpyruvyl to UDP-N-acetylglucosamine. The protein is UDP-N-acetylglucosamine 1-carboxyvinyltransferase of Colwellia psychrerythraea (strain 34H / ATCC BAA-681) (Vibrio psychroerythus).